Here is a 405-residue protein sequence, read N- to C-terminus: S-adenosylmethionine synthase (405 aa).

ATP is bound at residue 141–146; sequence GQGSVD.

Belongs to the AdoMet synthase 2 family. It depends on Mg(2+) as a cofactor.

The enzyme catalyses L-methionine + ATP + H2O = S-adenosyl-L-methionine + phosphate + diphosphate. The protein operates within amino-acid biosynthesis; S-adenosyl-L-methionine biosynthesis; S-adenosyl-L-methionine from L-methionine: step 1/1. Catalyzes the formation of S-adenosylmethionine from methionine and ATP. The protein is S-adenosylmethionine synthase of Methanococcus maripaludis (strain C7 / ATCC BAA-1331).